A 406-amino-acid chain; its full sequence is MKLPIYLDYAATTPVDERVAKKMMEYMTKDGVFGNPASRSHKFGWEAEEAVDVARNQIADLIGADAREIVFTSGATESDNLAIKGAAHFYQTKGKHIITVKTEHKAVLDTCRQLEREGFEVTYLEPETTGLVDIAKLEAAIRPDTILVSVMQVNNEIGVIQPIEEIGKICRAKKIIFHVDATQSVGKIPVDVQALNVDLMSFSSHKLYGPKGIGGLYVCRKPRVRLEAIIHGGGHERGMRSGTLPVHQIVGMGEAYRIAKEEMVTEMPRIKALRDRLYNGFKDMEEVYVNGTMEAGKRVDSNLNISFNFVEGESMMMSLKDIAVSSGSACTSASLEPSYVLRALGLNDELAHSSIRFSIGRWTTEEEIDHTIEIVKKAVTKLRELSPLWDMFKEGIDLNSIEWSHH.

Residues 75–76 (AT), Asn-155, Gln-183, and 203–205 (SSH) each bind pyridoxal 5'-phosphate. Lys-206 bears the N6-(pyridoxal phosphate)lysine mark. Thr-243 lines the pyridoxal 5'-phosphate pocket. Cys-330 serves as the catalytic Cysteine persulfide intermediate. Cys-330 provides a ligand contact to [2Fe-2S] cluster.

Belongs to the class-V pyridoxal-phosphate-dependent aminotransferase family. NifS/IscS subfamily. In terms of assembly, homodimer. Forms a heterotetramer with IscU, interacts with other sulfur acceptors. It depends on pyridoxal 5'-phosphate as a cofactor.

Its subcellular location is the cytoplasm. It carries out the reaction (sulfur carrier)-H + L-cysteine = (sulfur carrier)-SH + L-alanine. Its pathway is cofactor biosynthesis; iron-sulfur cluster biosynthesis. Master enzyme that delivers sulfur to a number of partners involved in Fe-S cluster assembly, tRNA modification or cofactor biosynthesis. Catalyzes the removal of elemental sulfur atoms from cysteine to produce alanine. Functions as a sulfur delivery protein for Fe-S cluster synthesis onto IscU, an Fe-S scaffold assembly protein, as well as other S acceptor proteins. This is Cysteine desulfurase IscS from Glaesserella parasuis serovar 5 (strain SH0165) (Haemophilus parasuis).